A 492-amino-acid polypeptide reads, in one-letter code: WD repeat-containing protein JIP5 (492 aa).

WD repeat units lie at residues 127–166 (RHKG…VVKK), 178–217 (KKND…LSNS), 236–274 (RSAY…ILIS), 276–317 (DQED…LEDQ), and 365–405 (RNHN…VEEN). Composition is skewed to acidic residues over residues 404–414 (ENASVESDSDE) and 422–433 (DLSDDTSSDDET). A disordered region spans residues 404-472 (ENASVESDSD…SKSVKKRKIM (69 aa)). Residues 449–462 (KDLKEDHQEEKESN) show a composition bias toward basic and acidic residues.

Belongs to the WD repeat WDR55 family. Interacts with BRE1, BUD27 and GIS1.

It is found in the nucleus. Its subcellular location is the nucleolus. This Saccharomyces cerevisiae (strain YJM789) (Baker's yeast) protein is WD repeat-containing protein JIP5 (JIP5).